The chain runs to 505 residues: Trans-cinnamate 4-monooxygenase C4H2 (505 aa).

Short sequence motifs (nuclear localization signal) lie at residues 161–168 and 247–254; these read VKKMKESN and EKRLKLFK. Cysteine 447 contributes to the heme binding site.

Belongs to the cytochrome P450 family. Heme is required as a cofactor.

Its subcellular location is the nucleus. It catalyses the reaction (E)-cinnamate + reduced [NADPH--hemoprotein reductase] + O2 = (E)-4-coumarate + oxidized [NADPH--hemoprotein reductase] + H2O + H(+). It participates in phenylpropanoid metabolism; trans-4-coumarate biosynthesis; trans-4-coumarate from trans-cinnamate: step 1/1. Component of the floral volatile benzenoid/phenylpropanoid (FVBP) biosynthetic pathway that controls carbon flux to pigments essential for pollination or UV protection, to numerous pytoalexins synthesized by plants when challenged by pathogens, and to lignins. The sequence is that of Trans-cinnamate 4-monooxygenase C4H2 from Petunia hybrida (Petunia).